A 576-amino-acid chain; its full sequence is (E,E)-alpha-farnesene synthase (576 aa).

Arginine 289, aspartate 326, aspartate 330, arginine 468, and asparagine 471 together coordinate (2E,6E)-farnesyl diphosphate. Residues aspartate 326 and aspartate 330 each coordinate Mg(2+). Residues 326–330 (DDVYD) carry the DDXXD motif motif. 3 residues coordinate Mg(2+): asparagine 471, threonine 475, and glutamate 479. The K(+) site is built by aspartate 484 and serine 487.

The protein belongs to the terpene synthase family. Tpsb subfamily. Monomer. Mg(2+) is required as a cofactor. Mn(2+) serves as cofactor. Requires K(+) as cofactor.

Its subcellular location is the cytoplasm. It carries out the reaction (2E,6E)-farnesyl diphosphate = (3E,6E)-alpha-farnesene + diphosphate. Functionally, sesquiterpene synthase catalyzing the production of (E,E)-alpha-farnesene, the predominant terpene produced during storage of fruits. Produces all six isomers (E,E)-alpha-farnesene, (Z,E)-alpha-farnesene, (E,Z)-alpha-farnesene, (Z,Z)-alpha-farnesene, (E)-beta-farnesene and (Z)-beta-farnesene from a mix of isomeric forms of the farnesyl diphosphate precursor. Able to convert geranyl diphosphate to the monoterpenes (E)-beta-ocimene, linalool and beta-myrcene. Also has a prenyltransferase activity producing alpha-farnesene directly from geranyl diphosphate and isoprenyl diphosphate. The chain is (E,E)-alpha-farnesene synthase (AFS1) from Malus domestica (Apple).